Consider the following 307-residue polypeptide: Acyl transferase (307 aa).

Residues Ser-116, Asp-213, and His-243 each act as charge relay system in the active site.

The protein belongs to the LuxD family.

Its pathway is lipid metabolism; fatty acid reduction for biolumincescence. Its function is as follows. Acyl transferase is part of the fatty acid reductase system required for aldehyde biosynthesis; it produces fatty acids for the luminescent reaction. This chain is Acyl transferase, found in Photorhabdus luminescens (Xenorhabdus luminescens).